The sequence spans 805 residues: Leucine--tRNA ligase (805 aa).

The short motif at 40-51 (PYPSGSGLHVGH) is the 'HIGH' region element. The short motif at 576–580 (KMSKS) is the 'KMSKS' region element. Lysine 579 provides a ligand contact to ATP.

Belongs to the class-I aminoacyl-tRNA synthetase family.

It is found in the cytoplasm. It catalyses the reaction tRNA(Leu) + L-leucine + ATP = L-leucyl-tRNA(Leu) + AMP + diphosphate. The chain is Leucine--tRNA ligase from Chlorobium chlorochromatii (strain CaD3).